Reading from the N-terminus, the 287-residue chain is MDKIKIALQYMMPKHLISRLVGKLAAAEMGSVTTAAIKWFIKQYKIDMSEAAQSSPEAYSTFNDFFTRALKPGIRPISDKKDYIVHPVDGAVSQCGPIKHGQIFQAKGHEYSSLALLGDRADDAKRFEDGDFATIYLAPKDYHRIHMPIKGTLSKMTYVPGELFSVNPLTAENVPGLFARNERVVAIFETEIGPMAMVLVGATIVASIETIWAGTVTPPTGKKVFTWDYPTEGPAALTLDKGAEMGRFKLGSTVVMLFAKDALDDFADDVTPKAVTRMGQPFAKIED.

Residues Asp89, His146, and Ser252 each act as charge relay system; for autoendoproteolytic cleavage activity in the active site. Residue Ser252 is the Schiff-base intermediate with substrate; via pyruvic acid; for decarboxylase activity of the active site. The residue at position 252 (Ser252) is a Pyruvic acid (Ser); by autocatalysis.

This sequence belongs to the phosphatidylserine decarboxylase family. PSD-B subfamily. Prokaryotic type I sub-subfamily. In terms of assembly, heterodimer of a large membrane-associated beta subunit and a small pyruvoyl-containing alpha subunit. Requires pyruvate as cofactor. Is synthesized initially as an inactive proenzyme. Formation of the active enzyme involves a self-maturation process in which the active site pyruvoyl group is generated from an internal serine residue via an autocatalytic post-translational modification. Two non-identical subunits are generated from the proenzyme in this reaction, and the pyruvate is formed at the N-terminus of the alpha chain, which is derived from the carboxyl end of the proenzyme. The autoendoproteolytic cleavage occurs by a canonical serine protease mechanism, in which the side chain hydroxyl group of the serine supplies its oxygen atom to form the C-terminus of the beta chain, while the remainder of the serine residue undergoes an oxidative deamination to produce ammonia and the pyruvoyl prosthetic group on the alpha chain. During this reaction, the Ser that is part of the protease active site of the proenzyme becomes the pyruvoyl prosthetic group, which constitutes an essential element of the active site of the mature decarboxylase.

The protein localises to the cell membrane. It carries out the reaction a 1,2-diacyl-sn-glycero-3-phospho-L-serine + H(+) = a 1,2-diacyl-sn-glycero-3-phosphoethanolamine + CO2. It functions in the pathway phospholipid metabolism; phosphatidylethanolamine biosynthesis; phosphatidylethanolamine from CDP-diacylglycerol: step 2/2. In terms of biological role, catalyzes the formation of phosphatidylethanolamine (PtdEtn) from phosphatidylserine (PtdSer). The sequence is that of Phosphatidylserine decarboxylase proenzyme from Shewanella woodyi (strain ATCC 51908 / MS32).